We begin with the raw amino-acid sequence, 397 residues long: Elongation factor Tu (397 aa).

The tr-type G domain occupies 10–207 (LPHVNVGTIG…TLDSYIPEPE (198 aa)). The tract at residues 19–26 (GHVDHGKT) is G1. GTP is bound at residue 19–26 (GHVDHGKT). Thr-26 provides a ligand contact to Mg(2+). Residues 60–64 (GITIN) are G2. The tract at residues 81–84 (DCPG) is G3. GTP contacts are provided by residues 81-85 (DCPGH) and 136-139 (NKAD). Residues 136-139 (NKAD) form a G4 region. The G5 stretch occupies residues 174-176 (SAR).

The protein belongs to the TRAFAC class translation factor GTPase superfamily. Classic translation factor GTPase family. EF-Tu/EF-1A subfamily. As to quaternary structure, monomer.

It is found in the cytoplasm. It carries out the reaction GTP + H2O = GDP + phosphate + H(+). Its function is as follows. GTP hydrolase that promotes the GTP-dependent binding of aminoacyl-tRNA to the A-site of ribosomes during protein biosynthesis. The polypeptide is Elongation factor Tu (Pseudomonas fluorescens (strain Pf0-1)).